Here is a 479-residue protein sequence, read N- to C-terminus: Cyclin-dependent kinase F-1 (479 aa).

One can recognise a Protein kinase domain in the interval 24 to 419 (YEVLGRAGSG…AADLLNDPYF (396 aa)). ATP is bound by residues 30–38 (AGSGAYADV) and lysine 53. The active-site Proton acceptor is the aspartate 146. Position 291 is a phosphothreonine (threonine 291). The disordered stretch occupies residues 429–479 (EGLQVPESKDEDDDSTEEWANFRGGDSDSDFDEFGSMDVTKTDKGFSIRFS). Positions 468 to 479 (TKTDKGFSIRFS) are enriched in basic and acidic residues.

This sequence belongs to the protein kinase superfamily. CMGC Ser/Thr protein kinase family. CDC2/CDKX subfamily.

The catalysed reaction is L-seryl-[protein] + ATP = O-phospho-L-seryl-[protein] + ADP + H(+). The enzyme catalyses L-threonyl-[protein] + ATP = O-phospho-L-threonyl-[protein] + ADP + H(+). It catalyses the reaction [DNA-directed RNA polymerase] + ATP = phospho-[DNA-directed RNA polymerase] + ADP + H(+). This chain is Cyclin-dependent kinase F-1 (CDKF-1), found in Oryza sativa subsp. japonica (Rice).